The sequence spans 558 residues: PE cleavage protein A (558 aa).

Residues 1 to 93 (MSFLVVVPEF…SGSYAAAEAT (93 aa)) form the PE domain. D297 is an active-site residue.

It belongs to the mycobacterial PE family. PGRS subfamily. Post-translationally, undergoes auto-proteolytic processing.

It localises to the secreted. The protein resides in the cell surface. In terms of biological role, aspartic protease that processes the lipase LipY and other PE_PGRS proteins. Can also cleave itself. This is PE cleavage protein A from Mycobacterium tuberculosis (strain CDC 1551 / Oshkosh).